We begin with the raw amino-acid sequence, 492 residues long: Transmembrane protein 104 homolog (492 aa).

Residues 1–17 (MQSNTDSSTSGTYSQTV) lie on the Cytoplasmic side of the membrane. Residues 18–38 (GLLYVFNLIVGTGALALPKAF) traverse the membrane as a helical segment. At 39 to 44 (QTAGWL) the chain is on the extracellular side. Residues 45-65 (LSITLLTFSAFMSYVAATFVI) form a helical membrane-spanning segment. Residues 66-113 (EALSVANAVLSKKRRVEYDDVVVADGPSTFEISKKVEVSEMASMFLSK) lie on the Cytoplasmic side of the membrane. A helical transmembrane segment spans residues 114–134 (VSLVFSYFAIIIYLFGDLAIY). The Extracellular segment spans residues 135–176 (STTVPKSAMNIVCATINASTVKSSDPCHESWPEILTRMTVYR). N-linked (GlcNAc...) asparagine glycosylation is present at Asn-151. The helical transmembrane segment at 177-197 (FFVIIFVVVVCLPMVIAGITK) threads the bilayer. The Cytoplasmic portion of the chain corresponds to 198-209 (TRHIQIMTTLSR). A helical membrane pass occupies residues 210 to 230 (WAAFILMISLATMQLSSDGAA). The Extracellular segment spans residues 231–237 (AHPPAYN). A helical membrane pass occupies residues 238–258 (FHGFGSLFGCAVYAFMCHHSI). Residues 259-274 (PSLITPMRTKDNVFGK) lie on the Cytoplasmic side of the membrane. The chain crosses the membrane as a helical span at residues 275–295 (IALVYGVVGVFYFTLSLTGAF). Over 296-324 (AFEHVQDIYTLNFFHDGNTSFIYSIIDYF) the chain is Extracellular. N-linked (GlcNAc...) asparagine glycosylation is present at Asn-313. A helical transmembrane segment spans residues 325 to 345 (LALFPIITLTSSYPIIALTLI). Over 346 to 392 (NNFNVVKDILCPKVGQENESLLEADSLVEDNDTDDEREARNARNEKS) the chain is Cytoplasmic. A helical transmembrane segment spans residues 393-413 (VFDVLVPALVLALPTFLSLLT). The Extracellular segment spans residues 414-415 (DD). Residues 416–436 (MLLLASITGSFPGVAVQFAIP) traverse the membrane as a helical segment. The Cytoplasmic portion of the chain corresponds to 437–466 (CLLVTAARKHARSVLNFPVPRKNNSPFQSP). The helical transmembrane segment at 467–487 (IWIVLISSWAGFSMIMVLLNL) threads the bilayer. Over 488–492 (VGVKF) the chain is Extracellular.

Belongs to the TMEM104 family.

The protein localises to the membrane. The polypeptide is Transmembrane protein 104 homolog (Caenorhabditis elegans).